The following is a 185-amino-acid chain: Probable calcium-binding protein CML10 (185 aa).

Positions 1 to 41 (MVKIKMPALFRRRSGSKSPPLPQADPASGGGSPAPTPEEEM) are disordered. EF-hand domains lie at 36–71 (TPEE…LGHA), 72–107 (ATDD…ASGD), 110–145 (AVEE…LGEK), and 146–181 (ATVQ…GGSF). 18 residues coordinate Ca(2+): aspartate 49, asparagine 51, aspartate 53, arginine 55, glutamate 60, aspartate 85, aspartate 87, aspartate 89, glutamate 96, aspartate 123, aspartate 125, asparagine 127, threonine 129, glutamate 134, aspartate 159, asparagine 161, aspartate 163, and glutamate 170.

Potential calcium sensor. The sequence is that of Probable calcium-binding protein CML10 (CML10) from Oryza sativa subsp. japonica (Rice).